A 1443-amino-acid chain; its full sequence is Sterol 3-beta-glucosyltransferase ATG26 (1443 aa).

The span at 1–13 (MATQADDAAASQA) shows a compositional bias: low complexity. Disordered stretches follow at residues 1–69 (MATQ…MFMN) and 88–187 (NDRF…LTLT). Positions 18–32 (GDLKEHVHDELDKIQ) are enriched in basic and acidic residues. Residues 49–58 (DSEDSDDEDN) are compositionally biased toward acidic residues. Residues 104–117 (QNTRTESIARTSIL) are compositionally biased toward polar residues. Residues 125–134 (DKVHRRRKLS) are compositionally biased toward basic residues. The segment covering 164-173 (EVADEADDEH) has biased composition (acidic residues). Residues 240-284 (LKEIFEFDEYEQVIEEYPCWLLQSVLLQGYMYITSKHICFYAYLP) enclose the GRAM 1 domain. The region spanning 289–385 (EAVKSGYLSK…WVKSLQRVIF (97 aa)) is the PH domain. Positions 463-657 (EQVITGDDHD…HGDRHHGIPH (195 aa)) are disordered. Over residues 506–525 (LAPMSPLSPRSPSQLSPRAS) the composition is skewed to low complexity. The segment covering 585–614 (SFLQSSIENPSISTLSPSSYDEPSASQILQ) has biased composition (polar residues). Basic residues predominate over residues 631–642 (SRKRDRSGKRTP). Residues 765–870 (RFRAHFALPE…DCAVTLHQLM (106 aa)) form the GRAM 2 domain. Residues 883–910 (DQEEQDDEEAAAAMAERDELQEARQDEF) are a coiled coil. UDP-alpha-D-glucose-binding residues include S957, R958, D960, A1265, H1267, H1280, S1283, G1284, T1285, D1304, and Q1305. Positions 1385–1443 (NAEHGLAEDDDDTEESWTFVGRDEPDPDAVTKKLSDGLAGLGAAGDRPPPLGSQAPTVA) are disordered. A compositionally biased stretch (basic and acidic residues) spans 1405-1419 (GRDEPDPDAVTKKLS).

It belongs to the glycosyltransferase 28 family.

It is found in the cytoplasm. The protein resides in the preautophagosomal structure membrane. The enzyme catalyses a sterol + UDP-alpha-D-glucose = a sterol 3-beta-D-glucoside + UDP + H(+). It carries out the reaction ergosterol + UDP-alpha-D-glucose = ergosteryl 3-beta-D-glucoside + UDP + H(+). In terms of biological role, sterol glycosyltransferase responsible for the glycosylation of ergosterol to form ergosterol-glucoside. The polypeptide is Sterol 3-beta-glucosyltransferase ATG26 (Gibberella zeae (strain ATCC MYA-4620 / CBS 123657 / FGSC 9075 / NRRL 31084 / PH-1) (Wheat head blight fungus)).